We begin with the raw amino-acid sequence, 197 residues long: Putative RNA polymerase II subunit B1 CTD phosphatase rtr1 (197 aa).

The RTR1-type zinc-finger motif lies at 60 to 139; that stretch reads EARKYLRKSD…LSDEPLWIRE (80 aa). Positions 83, 88, 115, and 119 each coordinate Zn(2+).

It belongs to the RPAP2 family.

Its subcellular location is the cytoplasm. It localises to the nucleus. It catalyses the reaction O-phospho-L-seryl-[protein] + H2O = L-seryl-[protein] + phosphate. The enzyme catalyses O-phospho-L-threonyl-[protein] + H2O = L-threonyl-[protein] + phosphate. Its function is as follows. Putative RNA polymerase II subunit B1 C-terminal domain (CTD) phosphatase involved in RNA polymerase II transcription regulation. This is Putative RNA polymerase II subunit B1 CTD phosphatase rtr1 from Schizosaccharomyces pombe (strain 972 / ATCC 24843) (Fission yeast).